Consider the following 142-residue polypeptide: Transcriptional regulator MraZ (142 aa).

2 SpoVT-AbrB domains span residues 5-51 and 77-120; these read ASSL…PRPE and AMDV…DKAT.

This sequence belongs to the MraZ family. In terms of assembly, forms oligomers.

It localises to the cytoplasm. It is found in the nucleoid. This chain is Transcriptional regulator MraZ, found in Variovorax paradoxus (strain S110).